The primary structure comprises 35 residues: Endochitinase 2 (35 aa).

Belongs to the glycosyl hydrolase 19 family. Chitinase class I subfamily.

It catalyses the reaction Random endo-hydrolysis of N-acetyl-beta-D-glucosaminide (1-&gt;4)-beta-linkages in chitin and chitodextrins.. Defense against chitin-containing fungal pathogens. This Capsicum chinense (Scotch bonnet) protein is Endochitinase 2.